We begin with the raw amino-acid sequence, 288 residues long: Light-independent protochlorophyllide reductase iron-sulfur ATP-binding protein (288 aa).

ATP-binding positions include 10-15 (GIGKST) and K39. Residue S14 participates in Mg(2+) binding. [4Fe-4S] cluster contacts are provided by C95 and C129. 180 to 181 (NR) is a binding site for ATP.

This sequence belongs to the NifH/BchL/ChlL family. As to quaternary structure, homodimer. Protochlorophyllide reductase is composed of three subunits; ChlL, ChlN and ChlB. The cofactor is [4Fe-4S] cluster.

The catalysed reaction is chlorophyllide a + oxidized 2[4Fe-4S]-[ferredoxin] + 2 ADP + 2 phosphate = protochlorophyllide a + reduced 2[4Fe-4S]-[ferredoxin] + 2 ATP + 2 H2O. Its pathway is porphyrin-containing compound metabolism; chlorophyll biosynthesis (light-independent). In terms of biological role, component of the dark-operative protochlorophyllide reductase (DPOR) that uses Mg-ATP and reduced ferredoxin to reduce ring D of protochlorophyllide (Pchlide) to form chlorophyllide a (Chlide). This reaction is light-independent. The L component serves as a unique electron donor to the NB-component of the complex, and binds Mg-ATP. In Nostoc sp. (strain PCC 7120 / SAG 25.82 / UTEX 2576), this protein is Light-independent protochlorophyllide reductase iron-sulfur ATP-binding protein.